The following is a 548-amino-acid chain: NAD(P)H-quinone oxidoreductase chain 4 (548 aa).

14 helical membrane passes run 17 to 37, 48 to 68, 103 to 123, 127 to 147, 149 to 169, 181 to 201, 222 to 242, 256 to 276, 290 to 310, 327 to 347, 348 to 368, 389 to 409, 430 to 450, and 477 to 497; these read VPWL…IPFI, WYAL…YLTG, LILL…PVTF, LFFF…AVQD, LLFF…LAIW, FILY…AMGF, GFQL…LPIV, TAPV…YALL, FAPL…LTSF, MGFV…GAML, QMIS…ATYD, FALW…SGFV, VVIC…LLSM, and VYII…PRLM.

It belongs to the complex I subunit 4 family.

It is found in the cellular thylakoid membrane. It catalyses the reaction a plastoquinone + NADH + (n+1) H(+)(in) = a plastoquinol + NAD(+) + n H(+)(out). The catalysed reaction is a plastoquinone + NADPH + (n+1) H(+)(in) = a plastoquinol + NADP(+) + n H(+)(out). In terms of biological role, NDH-1 shuttles electrons from NAD(P)H, via FMN and iron-sulfur (Fe-S) centers, to quinones in the respiratory chain. The immediate electron acceptor for the enzyme in this species is believed to be plastoquinone. Couples the redox reaction to proton translocation (for every two electrons transferred, four hydrogen ions are translocated across the cytoplasmic membrane), and thus conserves the redox energy in a proton gradient. This chain is NAD(P)H-quinone oxidoreductase chain 4, found in Synechococcus sp. (strain CC9902).